The primary structure comprises 272 residues: 3-methyl-2-oxobutanoate hydroxymethyltransferase (272 aa).

Residues D42 and D86 each coordinate Mg(2+). Residues 42 to 43 (DS), D86, and K116 each bind 3-methyl-2-oxobutanoate. E118 is a Mg(2+) binding site. E185 acts as the Proton acceptor in catalysis.

The protein belongs to the PanB family. As to quaternary structure, homodecamer; pentamer of dimers. Mg(2+) is required as a cofactor.

It localises to the cytoplasm. It catalyses the reaction 3-methyl-2-oxobutanoate + (6R)-5,10-methylene-5,6,7,8-tetrahydrofolate + H2O = 2-dehydropantoate + (6S)-5,6,7,8-tetrahydrofolate. The protein operates within cofactor biosynthesis; (R)-pantothenate biosynthesis; (R)-pantoate from 3-methyl-2-oxobutanoate: step 1/2. Its function is as follows. Catalyzes the reversible reaction in which hydroxymethyl group from 5,10-methylenetetrahydrofolate is transferred onto alpha-ketoisovalerate to form ketopantoate. The sequence is that of 3-methyl-2-oxobutanoate hydroxymethyltransferase from Prochlorococcus marinus (strain NATL1A).